Here is an 80-residue protein sequence, read N- to C-terminus: Consomatin Mrc1 (80 aa).

The first 22 residues, 1-22, serve as a signal peptide directing secretion; it reads MQTAYWVMVMMMVWITAPLSEG. Residues 23–57 constitute a propeptide that is removed on maturation; it reads GKLNDVIRGLVPDDVTPQLILRSLISRRPSDSVVR. Residues Cys63 and Cys68 are joined by a disulfide bond. Trp65 is subject to D-tryptophan. 4 positions are modified to 4-hydroxyproline: Pro69, Pro70, Pro71, and Pro72. Residues 74-80 constitute a propeptide that is removed on maturation; the sequence is RRPNGKG.

Belongs to the conotoxin C superfamily. Consomatin family. In terms of tissue distribution, expressed by the venom duct.

Its subcellular location is the secreted. Functionally, moderately activates human somatostatin receptors (SSTR) with a preferential activation of SSTR1 and SSTR4. In vivo, does not cause behavioral changes in mice within a few minutes of intracranial injection, but causes a progressive loss of movement thereafter. Four to five hours after injection, mice recover, even with the highest dose tested. Shows antinociception and antihyperalgesia activities in two mouse models of acute pain, most probably by acting outside the central nervous system. The polypeptide is Consomatin Mrc1 (Conus mercator (Trader cone)).